The chain runs to 137 residues: Probable glycine cleavage system H protein 1 (137 aa).

The 83-residue stretch at 31–113 (VAVIGITDYA…YGEGWIFKLK (83 aa)) folds into the Lipoyl-binding domain. Lys72 bears the N6-lipoyllysine mark.

The protein belongs to the GcvH family. The glycine cleavage system is composed of four proteins: P, T, L and H. (R)-lipoate is required as a cofactor.

Functionally, the glycine cleavage system catalyzes the degradation of glycine. The H protein shuttles the methylamine group of glycine from the P protein to the T protein. The protein is Probable glycine cleavage system H protein 1 of Saccharolobus solfataricus (strain ATCC 35092 / DSM 1617 / JCM 11322 / P2) (Sulfolobus solfataricus).